Consider the following 862-residue polypeptide: Transcription factor E2F7 (862 aa).

DNA-binding regions lie at residues 140–209 and 279–364; these read RKQK…CWHG and RKDK…KWIG. 3 disordered regions span residues 561-592, 617-643, and 788-862; these read PGSD…DAPL, TPEQ…NVGE, and KADS…SAGN. The span at 564 to 574 shows a compositional bias: polar residues; it reads DSPTLEETTMS. Over residues 575-590 the composition is skewed to basic and acidic residues; the sequence is KQERPTKRQLNDKDDA. Composition is skewed to polar residues over residues 633-643 and 832-851; these read EPVTKHSNVGE and DVSS…SSAQ.

It belongs to the E2F/DP family. Homodimer and heterodimer: mainly forms homodimers and, to a lesser extent, heterodimers with e2f8.

The protein resides in the nucleus. Atypical E2F transcription factor that participates in various processes such as angiogenesis and polyploidization of specialized cells. Mainly acts as a transcription repressor that binds DNA independently of DP proteins and specifically recognizes the E2 recognition site 5'-TTTC[CG]CGC-3'. Directly represses transcription of classical E2F transcription factors such as e2f1. Acts as a regulator of S-phase by recognizing and binding the E2-related site 5'-TTCCCGCC-3' and mediating repression of G1/S-regulated genes. Acts as a promoter of sprouting angiogenesis, possibly by acting as a transcription activator. In Xenopus tropicalis (Western clawed frog), this protein is Transcription factor E2F7 (e2f7).